Reading from the N-terminus, the 398-residue chain is Putative F-box protein At4g17780 (398 aa).

In terms of domain architecture, F-box spans Pro-8–Ser-55.

This is Putative F-box protein At4g17780 from Arabidopsis thaliana (Mouse-ear cress).